A 520-amino-acid polypeptide reads, in one-letter code: Keratin, type II cytoskeletal 72 (520 aa).

Residues 1-133 (MSRQLTLYPG…DPEIQKVRAQ (133 aa)) form a head region. Residues 134–169 (EREQIKALNNKFASFIDKVRFLEQQNQVLETKWELL) are coil 1A. An IF rod domain is found at 134–447 (EREQIKALNN…KLLESEESRM (314 aa)). The tract at residues 170 to 188 (QQLDLNNSKRSLEPVHESY) is linker 1. The tract at residues 189–280 (ISNLQKQLEI…VLFEGEIAQM (92 aa)) is coil 1B. A linker 12 region spans residues 281–304 (QSHISDTSVILSMDNNRQLDLDSI). The interval 305-443 (LAEVRAQYEE…ATYRKLLESE (139 aa)) is coil 2. The tract at residues 444 to 520 (ESRMAGEYPN…SSGTTKKTSR (77 aa)) is tail. The disordered stretch occupies residues 494-520 (KGSCGSELKDPPAKTSGSSGTTKKTSR). Positions 507 to 520 (KTSGSSGTTKKTSR) are enriched in low complexity.

The protein belongs to the intermediate filament family. In terms of assembly, heterotetramer of two type I and two type II keratins.

Has a role in hair formation. Specific component of keratin intermediate filaments in the inner root sheath (IRS) of the hair follicle. In Mus musculus (Mouse), this protein is Keratin, type II cytoskeletal 72 (Krt72).